Reading from the N-terminus, the 451-residue chain is Tapasin-related protein (451 aa).

The signal sequence occupies residues 1 to 20 (MGLEPSWYLLLCLAVSGAAG). Over 21–412 (TDPPTAPTTA…RVLPNPEQRG (392 aa)) the chain is Lumenal. In terms of domain architecture, Ig-like V-type spans 196–301 (FQVTSETQTL…TSLYQAQQIM (106 aa)). 2 disulfides stabilise this stretch: C217–C288 and C326–C387. N270 and N277 each carry an N-linked (GlcNAc...) asparagine glycan. Positions 302 to 399 (PLNILAPPKI…AHVSLEEPLT (98 aa)) constitute an Ig-like C1-type domain. The chain crosses the membrane as a helical span at residues 413–433 (TLGVIFASIIFLSALLLFLGL). Over 434–451 (HRQQASSSRSTRPMRHSG) the chain is Cytoplasmic.

Interacts with peptide-free HLA-A*02-B2M complexes or those loaded with low affinity peptides, likely facilitating peptide exchange onto higher affinity peptides. Interacts with MR1 in a ligand-independent way; this interaction may stabilize MR1 pool and facilitate ligand loading and dissociation. In terms of tissue distribution, widely expressed.

It localises to the cell membrane. It is found in the endoplasmic reticulum membrane. The protein localises to the microsome membrane. The protein resides in the golgi apparatus membrane. Component of the antigen processing and presentation pathway, which binds to MHC class I coupled with beta2-microglobulin/B2M. Association between TAPBPR and MHC class I occurs in the absence of a functional peptide-loading complex (PLC). Expression seems to slow down and down-regulate MHC class I surface expression. The protein is Tapasin-related protein (Tapbpl) of Mus musculus (Mouse).